The primary structure comprises 68 residues: Alpha-conotoxin-like Ca1.2 (68 aa).

Positions 1-21 are cleaved as a signal peptide; that stretch reads MGMRMMFTVFLLVVLATTVVS. A propeptide spanning residues 22–48 is cleaved from the precursor; that stretch reads FTSDRASEGRNAAAKDKASDLVALTVR. Disulfide bonds link Cys50–Cys56 and Cys51–Cys64. The tract at residues 52 to 54 is lacks the Ser-Xaa-Pro motif that is crucial for potent interaction with nAChR; it reads AIR. Sulfotyrosine is present on Tyr63. At Cys64 the chain carries Cysteine amide. A propeptide spanning residues 65-68 is cleaved from the precursor; it reads GGIY.

It belongs to the conotoxin A superfamily. As to expression, expressed by the venom duct.

The protein localises to the secreted. Its function is as follows. Alpha-conotoxins act on postsynaptic membranes, they bind to the nicotinic acetylcholine receptors (nAChR) and thus inhibit them. Has possibly a distinct nAChR binding mode from other alpha-conotoxins, due to a different three residue motif (lacks the Ser-Xaa-Pro motif). The protein is Alpha-conotoxin-like Ca1.2 of Conus caracteristicus (Characteristic cone).